The primary structure comprises 847 residues: KN motif and ankyrin repeat domain-containing protein 2 (847 aa).

Residues 1–32 are disordered; the sequence is MAQVLHVPAPFPGTPGQASSAAFPNKEPDPPY. Residues 1–72 form an interaction with AIFM1 region; sequence MAQVLHVPAP…PVQRRPRLGS (72 aa). Residues serine 19, serine 83, serine 86, serine 89, and serine 92 each carry the phosphoserine modification. Omega-N-methylarginine is present on arginine 105. The disordered stretch occupies residues 161 to 182; the sequence is LAGVGLLPPTPRSSGLSTPVAP. Threonine 170 is subject to Phosphothreonine. 2 coiled-coil regions span residues 187-207 and 284-311; these read LAHV…LEEQ and EAAL…AQTQ. Threonine 331 carries the post-translational modification Phosphothreonine. Residue serine 358 is modified to Phosphoserine. Disordered stretches follow at residues 414–473 and 502–581; these read GAAR…GGAS and NGGY…PEEE. Over residues 420–433 the composition is skewed to pro residues; that stretch reads DPPPSPAEPSPSSP. Composition is skewed to low complexity over residues 434-446 and 506-516; these read YPAA…APAA and ESSSEDSSTAE. Phosphoserine is present on serine 536. An ANK 0; degenerate repeat occupies 610–647; it reads RELKVAYTTVLQEWLRLACRSDAHPELVRRHLVTFRAM. 5 ANK repeats span residues 662–692, 696–729, 734–763, 767–797, and 801–831; these read NGNT…QVDK, AGYS…NVNA, AGQT…DVNM, DGST…DISL, and DGST…KCSF. The tract at residues 665–831 is interaction with NCOA1; that stretch reads TALHYSVSHA…YSRMNIKCSF (167 aa).

As to quaternary structure, interacts (non-phosphorylated form) with NCOA1; NCOA2 AND NCOA3. Interacts with AIFM1. Interacts with ARHGDIA; the interaction is direct and may regulate the interaction of ARHGDIA with RHOA, RAC1 and CDC42. Interacts (via ANK repeats 1-5) with KIF21A. Post-translationally, phosphorylated by casein kinase II upon estrogen stimulation. Phosphorylation induces the release by KANK2 of NCOA1 and its translocation to the nucleus where NCOA1 can activate gene transcription. Expressed by podocytes in kidney glomeruli (at protein level).

Its subcellular location is the cytoplasm. It localises to the mitochondrion. Its function is as follows. Involved in transcription regulation by sequestering in the cytoplasm nuclear receptor coactivators such as NCOA1, NCOA2 and NCOA3. Involved in regulation of caspase-independent apoptosis by sequestering the proapoptotic factor AIFM1 in mitochondria. Pro-apoptotic stimuli can induce its proteasomal degradation allowing the translocation of AIFM1 to the nucleus to induce apoptosis. Involved in the negative control of vitamin D receptor signaling pathway. Involved in actin stress fibers formation through its interaction with ARHGDIA and the regulation of the Rho signaling pathway. May thereby play a role in cell adhesion and migration, regulating for instance podocytes migration during development of the kidney. Through the Rho signaling pathway may also regulate cell proliferation. The protein is KN motif and ankyrin repeat domain-containing protein 2 of Rattus norvegicus (Rat).